A 160-amino-acid polypeptide reads, in one-letter code: Class II hydrophobin 8 (160 aa).

Disulfide bonds link Cys92–Cys141, Cys102–Cys132, Cys103–Cys115, and Cys142–Cys153.

It belongs to the cerato-ulmin hydrophobin family. In terms of assembly, homodimer. Homodimers further self-assemble to form highly ordered films at water-air interfaces through intermolecular interactions.

It is found in the secreted. The protein localises to the cell wall. Functionally, aerial growth, conidiation, and dispersal of filamentous fungi in the environment rely upon a capability of their secreting small amphipathic proteins called hydrophobins (HPBs) with low sequence identity. Class I can self-assemble into an outermost layer of rodlet bundles on aerial cell surfaces, conferring cellular hydrophobicity that supports fungal growth, development and dispersal; whereas Class II form highly ordered films at water-air interfaces through intermolecular interactions but contribute nothing to the rodlet structure. The chain is Class II hydrophobin 8 from Trichoderma asperellum (strain ATCC 204424 / CBS 433.97 / NBRC 101777).